A 129-amino-acid chain; its full sequence is Tumor necrosis factor receptor superfamily member 12A (129 aa).

A signal peptide spans 1 to 27 (MARGSLRRLLRLLVLGLWLALLRSVAG). Over 28–80 (EQAPGTAPCSRGSSWSADLDKCMDCASCRARPHSDFCLGCAAAPPAPFRLLWP) the chain is Extracellular. Disulfide bonds link Cys-36-Cys-49, Cys-52-Cys-67, and Cys-55-Cys-64. The stretch at 36-67 (CSRGSSWSADLDKCMDCASCRARPHSDFCLGC) is one TNFR-Cys; atypical repeat. A helical membrane pass occupies residues 81 to 101 (ILGGALSLTFVLGLLSGFLVW). The Cytoplasmic portion of the chain corresponds to 102 to 129 (RRCRRREKFTTPIEETGGEGCPAVALIQ).

Associates with TRAF1 and TRAF2, and probably also with TRAF3. As to expression, highly expressed in heart, placenta and kidney. Intermediate expression in lung, skeletal muscle and pancreas.

The protein resides in the membrane. Its function is as follows. Receptor for TNFSF12/TWEAK. Weak inducer of apoptosis in some cell types. Promotes angiogenesis and the proliferation of endothelial cells. May modulate cellular adhesion to matrix proteins. This chain is Tumor necrosis factor receptor superfamily member 12A (TNFRSF12A), found in Homo sapiens (Human).